The sequence spans 476 residues: Scopoletin glucosyltransferase (476 aa).

Histidine 16 functions as the Proton acceptor in the catalytic mechanism. An an anthocyanidin-binding site is contributed by histidine 16. Aspartate 119 acts as the Charge relay in catalysis. UDP-alpha-D-glucose-binding residues include alanine 343, glutamine 345, histidine 360, tryptophan 363, asparagine 364, serine 365, and glutamate 368. Alanine 383 is a binding site for an anthocyanidin. Positions 384 and 385 each coordinate UDP-alpha-D-glucose.

It belongs to the UDP-glycosyltransferase family.

The enzyme catalyses scopoletin + UDP-alpha-D-glucose = scopolin + UDP + H(+). Functionally, glucosyltransferase acting preferentially on aromatic substrates of the phenylpropanoid types. The best substrates are scopoletin and esculetin. Required for full resistance to virus. In Nicotiana tabacum (Common tobacco), this protein is Scopoletin glucosyltransferase (TOGT1).